Consider the following 236-residue polypeptide: Biosynthetic peptidoglycan transglycosylase (236 aa).

The chain crosses the membrane as a helical span at residues 12 to 31 (ALLWFAAGSVLVVLVLRWVP).

It belongs to the glycosyltransferase 51 family.

It localises to the cell inner membrane. The catalysed reaction is [GlcNAc-(1-&gt;4)-Mur2Ac(oyl-L-Ala-gamma-D-Glu-L-Lys-D-Ala-D-Ala)](n)-di-trans,octa-cis-undecaprenyl diphosphate + beta-D-GlcNAc-(1-&gt;4)-Mur2Ac(oyl-L-Ala-gamma-D-Glu-L-Lys-D-Ala-D-Ala)-di-trans,octa-cis-undecaprenyl diphosphate = [GlcNAc-(1-&gt;4)-Mur2Ac(oyl-L-Ala-gamma-D-Glu-L-Lys-D-Ala-D-Ala)](n+1)-di-trans,octa-cis-undecaprenyl diphosphate + di-trans,octa-cis-undecaprenyl diphosphate + H(+). Its pathway is cell wall biogenesis; peptidoglycan biosynthesis. Functionally, peptidoglycan polymerase that catalyzes glycan chain elongation from lipid-linked precursors. This Pseudomonas syringae pv. syringae (strain B728a) protein is Biosynthetic peptidoglycan transglycosylase.